The primary structure comprises 221 residues: Small ribosomal subunit protein uS3 (221 aa).

The region spanning 39–107 (LRKFLKDKLK…EVFLSIQEVR (69 aa)) is the KH type-2 domain.

This sequence belongs to the universal ribosomal protein uS3 family. Part of the 30S ribosomal subunit. Forms a tight complex with proteins S10 and S14.

Its function is as follows. Binds the lower part of the 30S subunit head. Binds mRNA in the 70S ribosome, positioning it for translation. The sequence is that of Small ribosomal subunit protein uS3 from Bdellovibrio bacteriovorus (strain ATCC 15356 / DSM 50701 / NCIMB 9529 / HD100).